Here is a 155-residue protein sequence, read N- to C-terminus: DNA gyrase inhibitor (155 aa).

It belongs to the DNA gyrase inhibitor family. As to quaternary structure, interacts with DNA gyrase.

The protein resides in the cytoplasm. Functionally, inhibits the supercoiling activity of DNA gyrase. Acts by inhibiting DNA gyrase at an early step, prior to (or at the step of) binding of DNA by the gyrase. It protects cells against toxins that target DNA gyrase, by inhibiting activity of these toxins and reducing the formation of lethal double-strand breaks in the cell. In Salmonella typhi, this protein is DNA gyrase inhibitor.